A 1521-amino-acid polypeptide reads, in one-letter code: Protein dispatched homolog 1 (1521 aa).

The span at 1–10 shows a compositional bias: polar residues; it reads MAVISGSDSV. Residues 1-55 form a disordered region; it reads MAVISGSDSVLLSNGSISTSTSNPSPLSPSDGDLPAQHLGPRETPRTKASPNGCL. A compositionally biased stretch (low complexity) spans 11–35; sequence LLSNGSISTSTSNPSPLSPSDGDLP. N-linked (GlcNAc...) asparagine glycans are attached at residues Asn-14 and Asn-58. Residues 189–209 form a helical membrane-spanning segment; the sequence is VVVLGMCTLLIVVCALVGVLV. The N-linked (GlcNAc...) asparagine glycan is linked to Asn-390. The SSD domain maps to 485–657; the sequence is GIEFGIKHSL…VTWLPAVIVL (173 aa). 3 helical membrane-spanning segments follow: residues 499–519, 524–544, and 548–568; these read LLMDTVYPAIAIAIVLLIMCV, MFITLMTMFAIISSLIVSYFL, and VFNFEFFPFMNLTALIILVGI. The N-linked (GlcNAc...) asparagine glycan is linked to Asn-581. Transmembrane regions (helical) follow at residues 603-623, 637-657, 717-737, 986-1006, 1008-1028, 1038-1058, 1081-1101, and 1109-1129; these read AALSMFVTSFTTAAAFYANYV, GTAILVNYVLMVTWLPAVIVL, YLWLIWFLALTVGGAYIVCVN, MGLSVAVAFSVMLLTTWNIII, LYAIVSIAGTIFVTVGSLVLL, VTISVAVGLSVDFAVHYGVAY, IAMAALTTFVAGAMMMPSTVL, and FMMLVMCVSWAFATFFFQCLC. Composition is skewed to polar residues over residues 1355–1364 and 1418–1428; these read QENLGRTSTH and TKSKVSGLPNQ. The disordered stretch occupies residues 1355–1440; the sequence is QENLGRTSTH…KEEKQVEPSL (86 aa). Asn-1455 carries an N-linked (GlcNAc...) asparagine glycan.

Belongs to the dispatched family. In terms of assembly, interacts with SHH; via the cholesterol anchor of the dually lipid-modified SHH (ShhNp).

It is found in the membrane. In terms of biological role, functions in hedgehog (Hh) signaling. Regulates the release and extracellular accumulation of cholesterol-modified hedgehog proteins and is hence required for effective production of the Hh signal. Synergizes with SCUBE2 to cause an increase in SHH secretion. In Mus musculus (Mouse), this protein is Protein dispatched homolog 1 (Disp1).